The primary structure comprises 466 residues: Glutamate--tRNA ligase (466 aa).

The 'HIGH' region motif lies at 10–20 (PSPTGALHIGG). Positions 99, 101, 126, and 128 each coordinate Zn(2+). Positions 239–243 (KLSKR) match the 'KMSKS' region motif. Lys-242 is an ATP binding site.

Belongs to the class-I aminoacyl-tRNA synthetase family. Glutamate--tRNA ligase type 1 subfamily. Monomer. Requires Zn(2+) as cofactor.

It is found in the cytoplasm. The catalysed reaction is tRNA(Glu) + L-glutamate + ATP = L-glutamyl-tRNA(Glu) + AMP + diphosphate. Functionally, catalyzes the attachment of glutamate to tRNA(Glu) in a two-step reaction: glutamate is first activated by ATP to form Glu-AMP and then transferred to the acceptor end of tRNA(Glu). In Pelagibacter ubique (strain HTCC1062), this protein is Glutamate--tRNA ligase.